We begin with the raw amino-acid sequence, 33 residues long: Ferredoxin (33 aa).

Positions 3-33 (KYKVRLLSEAEGIDVTIDSADDVYILDAAEE) constitute a 2Fe-2S ferredoxin-type domain.

It belongs to the 2Fe2S plant-type ferredoxin family. The cofactor is [2Fe-2S] cluster.

The protein localises to the plastid. Its subcellular location is the chloroplast. Its function is as follows. Ferredoxins are iron-sulfur proteins that transfer electrons in a wide variety of metabolic reactions. The polypeptide is Ferredoxin (Porphyridium aerugineum (Red microalga)).